We begin with the raw amino-acid sequence, 507 residues long: WD repeat-containing protein fzy-1 (507 aa).

2 disordered regions span residues 1-39 and 74-95; these read MNNKGRTPGSAGRTVRSSAQQNGLTMRKRDMTPTRNTNL and NKENLNNSMSEPNSPEKKSVEG. Composition is skewed to polar residues over residues 15-24 and 74-86; these read VRSSAQQNGL and NKENLNNSMSEPN. 4 WD repeats span residues 219–258, 313–352, 364–406, and 411–450; these read TNEGLITSVRWSQEGRYISLGYASGAVKIYDPNRPKTTEY, GHCRDVTALEWSADENMCVSGSSDRTAKIWDGRHVRGSTV, EHTG…QKVR, and CETGGVGGIVFNRPYSEMLTASDDGFLRIYRFNANYKLSH.

Belongs to the WD repeat CDC20/Fizzy family.

The protein resides in the chromosome. It localises to the cytoplasm. Functionally, plays a role in metaphase-anaphase transition during meiosis I. Required for embryonic anterior-posterior axis formation. This chain is WD repeat-containing protein fzy-1, found in Caenorhabditis elegans.